We begin with the raw amino-acid sequence, 193 residues long: 3-isopropylmalate dehydratase small subunit (193 aa).

Belongs to the LeuD family. LeuD type 1 subfamily. In terms of assembly, heterodimer of LeuC and LeuD.

The catalysed reaction is (2R,3S)-3-isopropylmalate = (2S)-2-isopropylmalate. It participates in amino-acid biosynthesis; L-leucine biosynthesis; L-leucine from 3-methyl-2-oxobutanoate: step 2/4. Functionally, catalyzes the isomerization between 2-isopropylmalate and 3-isopropylmalate, via the formation of 2-isopropylmaleate. This Bacillus cereus (strain ATCC 10987 / NRS 248) protein is 3-isopropylmalate dehydratase small subunit.